The primary structure comprises 93 residues: Putative pterin-4-alpha-carbinolamine dehydratase (93 aa).

Belongs to the pterin-4-alpha-carbinolamine dehydratase family.

The catalysed reaction is (4aS,6R)-4a-hydroxy-L-erythro-5,6,7,8-tetrahydrobiopterin = (6R)-L-erythro-6,7-dihydrobiopterin + H2O. The chain is Putative pterin-4-alpha-carbinolamine dehydratase from Roseiflexus sp. (strain RS-1).